The following is a 353-amino-acid chain: UDP-N-acetylglucosamine--N-acetylmuramyl-(pentapeptide) pyrophosphoryl-undecaprenol N-acetylglucosamine transferase (353 aa).

UDP-N-acetyl-alpha-D-glucosamine-binding positions include Thr14 to Gly16, Asn126, Arg162, Ser190, Ile243, Ala262 to Glu267, and Gln287.

This sequence belongs to the glycosyltransferase 28 family. MurG subfamily.

The protein resides in the cell inner membrane. It carries out the reaction di-trans,octa-cis-undecaprenyl diphospho-N-acetyl-alpha-D-muramoyl-L-alanyl-D-glutamyl-meso-2,6-diaminopimeloyl-D-alanyl-D-alanine + UDP-N-acetyl-alpha-D-glucosamine = di-trans,octa-cis-undecaprenyl diphospho-[N-acetyl-alpha-D-glucosaminyl-(1-&gt;4)]-N-acetyl-alpha-D-muramoyl-L-alanyl-D-glutamyl-meso-2,6-diaminopimeloyl-D-alanyl-D-alanine + UDP + H(+). It participates in cell wall biogenesis; peptidoglycan biosynthesis. Its function is as follows. Cell wall formation. Catalyzes the transfer of a GlcNAc subunit on undecaprenyl-pyrophosphoryl-MurNAc-pentapeptide (lipid intermediate I) to form undecaprenyl-pyrophosphoryl-MurNAc-(pentapeptide)GlcNAc (lipid intermediate II). This is UDP-N-acetylglucosamine--N-acetylmuramyl-(pentapeptide) pyrophosphoryl-undecaprenol N-acetylglucosamine transferase from Vibrio atlanticus (strain LGP32) (Vibrio splendidus (strain Mel32)).